The primary structure comprises 394 residues: E3 ubiquitin-protein ligase RNF149 (394 aa).

A signal peptide spans Met-1–Gly-31. Asn-51 and Asn-141 each carry an N-linked (GlcNAc...) asparagine glycan. Positions Ser-66–Val-171 constitute a PA domain. A helical membrane pass occupies residues Val-197–Phe-217. The RING-type; atypical zinc-finger motif lies at Cys-265–Lys-306. Residues Asp-321–Cys-394 form a disordered region. Phosphothreonine is present on Thr-327. N-linked (GlcNAc...) asparagine glycosylation occurs at Asn-339. Residues Ser-341 and Ser-344 each carry the phosphoserine modification. A compositionally biased stretch (low complexity) spans Ser-352–Ser-362.

The protein resides in the membrane. It carries out the reaction S-ubiquitinyl-[E2 ubiquitin-conjugating enzyme]-L-cysteine + [acceptor protein]-L-lysine = [E2 ubiquitin-conjugating enzyme]-L-cysteine + N(6)-ubiquitinyl-[acceptor protein]-L-lysine.. It functions in the pathway protein modification; protein ubiquitination. Its function is as follows. E3 ubiquitin-protein ligase. Ubiquitinates BRAF, inducing its proteasomal degradation. This chain is E3 ubiquitin-protein ligase RNF149 (Rnf149), found in Mus musculus (Mouse).